Reading from the N-terminus, the 331-residue chain is Cathepsin 7 (331 aa).

A signal peptide spans methionine 1–alanine 17. The propeptide at alanine 18 to lysine 111 is activation peptide. The Nuclear localization signal motif lies at lysine 33 to alanine 50. Asparagine 72 carries N-linked (GlcNAc...) asparagine glycosylation. Intrachain disulfides connect cysteine 133/cysteine 176, cysteine 167/cysteine 209, and cysteine 267/cysteine 320. Cysteine 136 is an active-site residue. Residues histidine 274 and asparagine 298 contribute to the active site.

This sequence belongs to the peptidase C1 family.

The protein resides in the endosome. It localises to the lysosome. It is found in the cytoplasm. The protein localises to the perinuclear region. Its subcellular location is the golgi apparatus. The protein resides in the nucleus. It localises to the secreted. It is found in the extracellular space. Functionally, involved in trophoblast cell proliferation and differentiation probably by affecting mitotic cell cycle progression. Proteolytic activity and nuclear localization are essential for its role in cell cycle progression. This chain is Cathepsin 7 (Cts7), found in Rattus norvegicus (Rat).